The chain runs to 84 residues: Large ribosomal subunit protein bL27 (84 aa).

It belongs to the bacterial ribosomal protein bL27 family.

The polypeptide is Large ribosomal subunit protein bL27 (Kocuria rhizophila (strain ATCC 9341 / DSM 348 / NBRC 103217 / DC2201)).